Consider the following 287-residue polypeptide: Shikimate dehydrogenase (NADP(+)) (287 aa).

Residues 20–22 (SRS) and Thr67 each bind shikimate. Catalysis depends on Lys71, which acts as the Proton acceptor. Glu84 is a binding site for NADP(+). Shikimate contacts are provided by Asn93 and Asp108. NADP(+) contacts are provided by residues 132–136 (GAGGA), 156–161 (NRTAAR), and Met226. Shikimate is bound at residue Tyr228. Residue Gly250 coordinates NADP(+).

The protein belongs to the shikimate dehydrogenase family. Homodimer.

It carries out the reaction shikimate + NADP(+) = 3-dehydroshikimate + NADPH + H(+). It participates in metabolic intermediate biosynthesis; chorismate biosynthesis; chorismate from D-erythrose 4-phosphate and phosphoenolpyruvate: step 4/7. Its function is as follows. Involved in the biosynthesis of the chorismate, which leads to the biosynthesis of aromatic amino acids. Catalyzes the reversible NADPH linked reduction of 3-dehydroshikimate (DHSA) to yield shikimate (SA). The sequence is that of Shikimate dehydrogenase (NADP(+)) from Bordetella parapertussis (strain 12822 / ATCC BAA-587 / NCTC 13253).